A 592-amino-acid polypeptide reads, in one-letter code: Monocopper oxidase-like protein SKS2 (592 aa).

Positions M1–A23 are cleaved as a signal peptide. N61, N110, N172, N203, N259, N280, N295, N344, N364, N433, and N447 each carry an N-linked (GlcNAc...) asparagine glycan. H455 is a binding site for Cu cation. N-linked (GlcNAc...) asparagine glycosylation is found at N476 and N536. S564 carries GPI-anchor amidated serine lipidation. The propeptide at A565 to C592 is removed in mature form.

This sequence belongs to the multicopper oxidase family. Cu cation is required as a cofactor.

It is found in the cell membrane. The sequence is that of Monocopper oxidase-like protein SKS2 (SKS2) from Arabidopsis thaliana (Mouse-ear cress).